Consider the following 305-residue polypeptide: MLKQRTIKSIVKTVGIGLHSGRKVELTLRPAAPGTGIVFSRVDLPTPVDIPASAMSIGDTRLASVLQKDGARVSTIEHLMSACAGLGIDNLYVDVTAEEIPIMDGSAASFVFLIQSAGIEEQNAPKRFIKVKKPVEVRDGDKFARLDPFFGFKLKFTIDFRHPAVDKTGQALEVDFANTSYVREIARARTFGFAHEVEMMRELGLARGGSMDNAIVLDEYRILNNDGLRYDDEFVKHKMLDAIGDLYVVGHPLLASYTAYKSGHGLNNALLRELLAHEDAYEIVTFDDPQAAPSGFAFDTQTAFA.

The Zn(2+) site is built by histidine 78, histidine 237, and aspartate 241. The Proton donor role is filled by histidine 264.

Belongs to the LpxC family. The cofactor is Zn(2+).

It catalyses the reaction a UDP-3-O-[(3R)-3-hydroxyacyl]-N-acetyl-alpha-D-glucosamine + H2O = a UDP-3-O-[(3R)-3-hydroxyacyl]-alpha-D-glucosamine + acetate. The protein operates within glycolipid biosynthesis; lipid IV(A) biosynthesis; lipid IV(A) from (3R)-3-hydroxytetradecanoyl-[acyl-carrier-protein] and UDP-N-acetyl-alpha-D-glucosamine: step 2/6. Its function is as follows. Catalyzes the hydrolysis of UDP-3-O-myristoyl-N-acetylglucosamine to form UDP-3-O-myristoylglucosamine and acetate, the committed step in lipid A biosynthesis. This chain is UDP-3-O-acyl-N-acetylglucosamine deacetylase, found in Burkholderia multivorans (strain ATCC 17616 / 249).